We begin with the raw amino-acid sequence, 406 residues long: Glutamyl-tRNA reductase (406 aa).

Residues 50–53 (TCNR), Ser107, 112–114 (EPQ), and Gln118 contribute to the substrate site. Residue Cys51 is the Nucleophile of the active site. NADP(+) is bound at residue 187-192 (GAGEMG).

This sequence belongs to the glutamyl-tRNA reductase family. As to quaternary structure, homodimer.

It carries out the reaction (S)-4-amino-5-oxopentanoate + tRNA(Glu) + NADP(+) = L-glutamyl-tRNA(Glu) + NADPH + H(+). It functions in the pathway porphyrin-containing compound metabolism; protoporphyrin-IX biosynthesis; 5-aminolevulinate from L-glutamyl-tRNA(Glu): step 1/2. Its function is as follows. Catalyzes the NADPH-dependent reduction of glutamyl-tRNA(Glu) to glutamate 1-semialdehyde (GSA). This chain is Glutamyl-tRNA reductase, found in Aquifex aeolicus (strain VF5).